We begin with the raw amino-acid sequence, 338 residues long: Putative peptide import ATP-binding protein BMEII0863 (338 aa).

An ABC transporter domain is found at 10 to 263 (KGLRTVFRTR…PRHPYTMGLL (254 aa)). ATP is bound at residue 43–50 (GESGSGKS).

It belongs to the ABC transporter superfamily. As to quaternary structure, the complex is composed of two ATP-binding proteins (BMEII0863 and BMEII0864), two transmembrane proteins (BMEII0860 and BMEII0861) and a solute-binding protein (BMEII0859).

The protein resides in the cell inner membrane. Probably part of an ABC transporter complex that could be involved in peptide import. Probably responsible for energy coupling to the transport system. The protein is Putative peptide import ATP-binding protein BMEII0863 of Brucella melitensis biotype 1 (strain ATCC 23456 / CCUG 17765 / NCTC 10094 / 16M).